Here is a 257-residue protein sequence, read N- to C-terminus: Phosphate import ATP-binding protein PstB (257 aa).

Residues 11–252 (LEVRDLNFFY…PQKKATEDYI (242 aa)) enclose the ABC transporter domain. 43-50 (GPSGCGKS) contacts ATP.

It belongs to the ABC transporter superfamily. Phosphate importer (TC 3.A.1.7) family. As to quaternary structure, the complex is composed of two ATP-binding proteins (PstB), two transmembrane proteins (PstC and PstA) and a solute-binding protein (PstS).

It localises to the cell inner membrane. It catalyses the reaction phosphate(out) + ATP + H2O = ADP + 2 phosphate(in) + H(+). Its function is as follows. Part of the ABC transporter complex PstSACB involved in phosphate import. Responsible for energy coupling to the transport system. The protein is Phosphate import ATP-binding protein PstB of Chromobacterium violaceum (strain ATCC 12472 / DSM 30191 / JCM 1249 / CCUG 213 / NBRC 12614 / NCIMB 9131 / NCTC 9757 / MK).